A 174-amino-acid chain; its full sequence is Small ribosomal subunit protein uS5 (174 aa).

An S5 DRBM domain is found at 16–79; the sequence is FSELIVSVRR…NAARKNMIRV (64 aa).

This sequence belongs to the universal ribosomal protein uS5 family. Part of the 30S ribosomal subunit. Contacts proteins S4 and S8.

With S4 and S12 plays an important role in translational accuracy. In terms of biological role, located at the back of the 30S subunit body where it stabilizes the conformation of the head with respect to the body. The chain is Small ribosomal subunit protein uS5 from Ehrlichia ruminantium (strain Gardel).